The following is a 220-amino-acid chain: ATP phosphoribosyltransferase (220 aa).

This sequence belongs to the ATP phosphoribosyltransferase family. Short subfamily. As to quaternary structure, heteromultimer composed of HisG and HisZ subunits.

It is found in the cytoplasm. It carries out the reaction 1-(5-phospho-beta-D-ribosyl)-ATP + diphosphate = 5-phospho-alpha-D-ribose 1-diphosphate + ATP. The protein operates within amino-acid biosynthesis; L-histidine biosynthesis; L-histidine from 5-phospho-alpha-D-ribose 1-diphosphate: step 1/9. In terms of biological role, catalyzes the condensation of ATP and 5-phosphoribose 1-diphosphate to form N'-(5'-phosphoribosyl)-ATP (PR-ATP). Has a crucial role in the pathway because the rate of histidine biosynthesis seems to be controlled primarily by regulation of HisG enzymatic activity. This is ATP phosphoribosyltransferase from Prochlorococcus marinus (strain NATL1A).